An 851-amino-acid polypeptide reads, in one-letter code: DNA mismatch repair protein MutS (851 aa).

602–609 (GPNMSGKS) is a binding site for ATP.

It belongs to the DNA mismatch repair MutS family.

Its function is as follows. This protein is involved in the repair of mismatches in DNA. It is possible that it carries out the mismatch recognition step. This protein has a weak ATPase activity. The chain is DNA mismatch repair protein MutS from Streptococcus pyogenes serotype M4 (strain MGAS10750).